Consider the following 555-residue polypeptide: Cytochrome P450 monooxygeanse terQ (555 aa).

Residues 10–30 traverse the membrane as a helical segment; sequence VPAHAWPTITVAGAVMVVVLL. Cys479 is a heme binding site. Residues 535-555 form a disordered region; that stretch reads DAGNTARVDPGAPDGVASEPS.

Belongs to the cytochrome P450 family. It depends on heme as a cofactor.

The protein localises to the membrane. The protein operates within secondary metabolite biosynthesis. Functionally, cytochrome P450 monooxygeanse; part of the gene cluster that mediates the biosynthesis of terpendoles, indole-diterpene (IDT) mycotoxins including terpendole I, terpendole K, terpendole C, as well as the kinesin Eg5 inhibitor terpendole E. TerQ is a C11-hydroxylating enzyme that converts paspalline into terpendole E. Is also able to hydroxylate 13-desoxyterpendole I at C-13 to produce terpendole I. Terpendoles biosynthesis begins with the synthesis of geranylgeranyl diphosphate (GGPP) by a yet unidentified GGPP synthase. Condensation of indole-3-glycerol phosphate with GGPP by the prenyltransferase terC then forms 3-geranylgeranylindole (3-GGI), followed by epoxidation and cyclization of this intermediate (by the FAD-dependent monooxygeanse terM and the terpene cyclase terB) to form paspaline. The cytochrome monooxygenase terQ then hydroxylates paspalline at C-11 to yield terpendole E. The cytochrome monooxygenase terP converts terpendole E to 13-desoxyterpendole I, and terQ converts 13-desoxyterpendole I into terpendole I. TerF and terK are required for conversion of terpendole I to terpendole C which is further converted to terpendole K. This is Cytochrome P450 monooxygeanse terQ from Tolypocladium album (Soil fungus).